The chain runs to 481 residues: Aspartyl/glutamyl-tRNA(Asn/Gln) amidotransferase subunit B (481 aa).

Belongs to the GatB/GatE family. GatB subfamily. As to quaternary structure, heterotrimer of A, B and C subunits.

The enzyme catalyses L-glutamyl-tRNA(Gln) + L-glutamine + ATP + H2O = L-glutaminyl-tRNA(Gln) + L-glutamate + ADP + phosphate + H(+). It catalyses the reaction L-aspartyl-tRNA(Asn) + L-glutamine + ATP + H2O = L-asparaginyl-tRNA(Asn) + L-glutamate + ADP + phosphate + 2 H(+). In terms of biological role, allows the formation of correctly charged Asn-tRNA(Asn) or Gln-tRNA(Gln) through the transamidation of misacylated Asp-tRNA(Asn) or Glu-tRNA(Gln) in organisms which lack either or both of asparaginyl-tRNA or glutaminyl-tRNA synthetases. The reaction takes place in the presence of glutamine and ATP through an activated phospho-Asp-tRNA(Asn) or phospho-Glu-tRNA(Gln). In Fusobacterium nucleatum subsp. nucleatum (strain ATCC 25586 / DSM 15643 / BCRC 10681 / CIP 101130 / JCM 8532 / KCTC 2640 / LMG 13131 / VPI 4355), this protein is Aspartyl/glutamyl-tRNA(Asn/Gln) amidotransferase subunit B.